Consider the following 112-residue polypeptide: K(+)/H(+) antiporter modulator KhtS (112 aa).

Positions 42–64 (YVPMSSYPQETQSAKTPSPGSMH) are disordered. Positions 47 to 60 (SYPQETQSAKTPSP) are enriched in polar residues.

It localises to the cell membrane. Modulates the activity of the potassium/proton antiporter KhtU. Involved in protection of the cell from methylglyoxal, a toxic by-product of glycolysis. The protein is K(+)/H(+) antiporter modulator KhtS of Bacillus subtilis (strain 168).